A 336-amino-acid chain; its full sequence is Putative transcription factor avaE (336 aa).

The WRKY DNA-binding region spans Thr-32–Pro-100.

Its subcellular location is the nucleus. It functions in the pathway secondary metabolite biosynthesis. In terms of biological role, putative transcription factor; part of the cluster that mediates the biosynthesis of a highly modified cyclo-arginine-tryptophan dipeptide (cRW). The sequence is that of Putative transcription factor avaE from Aspergillus versicolor.